Consider the following 114-residue polypeptide: UPF0342 protein lp_1415 (114 aa).

This sequence belongs to the UPF0342 family.

The protein is UPF0342 protein lp_1415 of Lactiplantibacillus plantarum (strain ATCC BAA-793 / NCIMB 8826 / WCFS1) (Lactobacillus plantarum).